The primary structure comprises 138 residues: Large ribosomal subunit protein uL16 (138 aa).

The segment covering 1–13 (MLQPARRKYRKEQ) has biased composition (basic residues). The interval 1–22 (MLQPARRKYRKEQKGRNTGVAT) is disordered.

The protein belongs to the universal ribosomal protein uL16 family. Part of the 50S ribosomal subunit.

Binds 23S rRNA and is also seen to make contacts with the A and possibly P site tRNAs. In Polaromonas naphthalenivorans (strain CJ2), this protein is Large ribosomal subunit protein uL16.